Here is a 357-residue protein sequence, read N- to C-terminus: UDP-N-acetylglucosamine--N-acetylmuramyl-(pentapeptide) pyrophosphoryl-undecaprenol N-acetylglucosamine transferase (357 aa).

Residues 13-15 (SAG), arginine 166, serine 196, and glutamine 291 each bind UDP-N-acetyl-alpha-D-glucosamine.

This sequence belongs to the glycosyltransferase 28 family. MurG subfamily.

It is found in the cell membrane. It catalyses the reaction di-trans,octa-cis-undecaprenyl diphospho-N-acetyl-alpha-D-muramoyl-L-alanyl-D-glutamyl-meso-2,6-diaminopimeloyl-D-alanyl-D-alanine + UDP-N-acetyl-alpha-D-glucosamine = di-trans,octa-cis-undecaprenyl diphospho-[N-acetyl-alpha-D-glucosaminyl-(1-&gt;4)]-N-acetyl-alpha-D-muramoyl-L-alanyl-D-glutamyl-meso-2,6-diaminopimeloyl-D-alanyl-D-alanine + UDP + H(+). The protein operates within cell wall biogenesis; peptidoglycan biosynthesis. Its function is as follows. Cell wall formation. Catalyzes the transfer of a GlcNAc subunit on undecaprenyl-pyrophosphoryl-MurNAc-pentapeptide (lipid intermediate I) to form undecaprenyl-pyrophosphoryl-MurNAc-(pentapeptide)GlcNAc (lipid intermediate II). This Clostridium perfringens (strain SM101 / Type A) protein is UDP-N-acetylglucosamine--N-acetylmuramyl-(pentapeptide) pyrophosphoryl-undecaprenol N-acetylglucosamine transferase.